A 597-amino-acid chain; its full sequence is Uptake hydrogenase large subunit (597 aa).

Ni(2+)-binding residues include Cys-75, Cys-78, Cys-576, and Cys-579.

This sequence belongs to the [NiFe]/[NiFeSe] hydrogenase large subunit family. Heterodimer of a large and a small subunit. Ni(2+) is required as a cofactor.

Its subcellular location is the cell membrane. It catalyses the reaction H2 + A = AH2. Its function is as follows. This enzyme recycles the H(2) produced by nitrogenase to increase the production of ATP and to protect nitrogenase against inhibition or damage by O(2) under carbon- or phosphate-limited conditions. The chain is Uptake hydrogenase large subunit (hupB) from Rhodobacter capsulatus (Rhodopseudomonas capsulata).